The primary structure comprises 302 residues: uncharacterized protein (302 aa).

It belongs to the HAD-like hydrolase superfamily.

Its subcellular location is the cytoplasm. The protein localises to the nucleus. This is an uncharacterized protein from Schizosaccharomyces pombe (strain 972 / ATCC 24843) (Fission yeast).